A 173-amino-acid polypeptide reads, in one-letter code: Crossover junction endodeoxyribonuclease RuvC (173 aa).

Catalysis depends on residues aspartate 8, glutamate 67, and aspartate 139. Mg(2+) contacts are provided by aspartate 8, glutamate 67, and aspartate 139.

The protein belongs to the RuvC family. Homodimer which binds Holliday junction (HJ) DNA. The HJ becomes 2-fold symmetrical on binding to RuvC with unstacked arms; it has a different conformation from HJ DNA in complex with RuvA. In the full resolvosome a probable DNA-RuvA(4)-RuvB(12)-RuvC(2) complex forms which resolves the HJ. The cofactor is Mg(2+).

Its subcellular location is the cytoplasm. The catalysed reaction is Endonucleolytic cleavage at a junction such as a reciprocal single-stranded crossover between two homologous DNA duplexes (Holliday junction).. In terms of biological role, the RuvA-RuvB-RuvC complex processes Holliday junction (HJ) DNA during genetic recombination and DNA repair. Endonuclease that resolves HJ intermediates. Cleaves cruciform DNA by making single-stranded nicks across the HJ at symmetrical positions within the homologous arms, yielding a 5'-phosphate and a 3'-hydroxyl group; requires a central core of homology in the junction. The consensus cleavage sequence is 5'-(A/T)TT(C/G)-3'. Cleavage occurs on the 3'-side of the TT dinucleotide at the point of strand exchange. HJ branch migration catalyzed by RuvA-RuvB allows RuvC to scan DNA until it finds its consensus sequence, where it cleaves and resolves the cruciform DNA. The protein is Crossover junction endodeoxyribonuclease RuvC of Psychromonas ingrahamii (strain DSM 17664 / CCUG 51855 / 37).